Here is a 260-residue protein sequence, read N- to C-terminus: GDSL esterase/lipase WDL1 (260 aa).

A signal peptide spans 1 to 35 (MLGFAPAPGRPLFVLFGSSIVQFSFSNGGWGAALA). The active-site Nucleophile is Ser18. N-linked (GlcNAc...) asparagine glycosylation is found at Asn83 and Asn150. Catalysis depends on residues Asp191 and His194.

It belongs to the 'GDSL' lipolytic enzyme family. As to expression, highly expressed in panicles. Expressed in shoots, mature flowers and seeds.

The protein localises to the endoplasmic reticulum. Functionally, involved in the organization of leaf cuticle and wax crystals. This is GDSL esterase/lipase WDL1 from Oryza sativa subsp. japonica (Rice).